The chain runs to 433 residues: Acetyl-CoA-benzylalcohol acetyltransferase (433 aa).

Residues H152 and D377 each act as proton acceptor in the active site.

It belongs to the plant acyltransferase family. The N-terminus is blocked. As to expression, expressed in petals, style, sepals and stamens. Very low expression in stigma and not detected in leaves.

The catalysed reaction is benzyl alcohol + acetyl-CoA = benzyl acetate + CoA. It carries out the reaction (E)-cinnamyl alcohol + acetyl-CoA = (E)-cinnamyl acetate + CoA. Functionally, involved in the biosynthesis of benzyl acetate, a major constituent of the floral scent. Can use benzylalcohol, cinnamylalcohol, 3-cis-hexene-1-ol or heptanol as substrates. Has some activity with 2-phenylethanol and 2-naphtalene-ethanol, but no activity with linalool, 2-hydroxybenzylalcohol, 3-hydroxybenzylalcohol or 4-hydroxybenzylalcohol. This Clarkia breweri (Fairy fans) protein is Acetyl-CoA-benzylalcohol acetyltransferase (BEAT).